Reading from the N-terminus, the 744-residue chain is Phosphoribosylformylglycinamidine synthase subunit PurL (744 aa).

Histidine 50 is an active-site residue. Residues tyrosine 53 and lysine 92 each coordinate ATP. Glutamate 94 lines the Mg(2+) pocket. Residues 95 to 98 and arginine 117 each bind substrate; that span reads SHNH. The Proton acceptor role is filled by histidine 96. Aspartate 118 is a Mg(2+) binding site. Glutamine 241 contacts substrate. Aspartate 269 lines the Mg(2+) pocket. A substrate-binding site is contributed by 313–315; the sequence is ESQ. ATP is bound by residues aspartate 495 and glycine 532. Asparagine 533 provides a ligand contact to Mg(2+). Residue serine 535 participates in substrate binding.

It belongs to the FGAMS family. As to quaternary structure, monomer. Part of the FGAM synthase complex composed of 1 PurL, 1 PurQ and 2 PurS subunits.

It is found in the cytoplasm. The catalysed reaction is N(2)-formyl-N(1)-(5-phospho-beta-D-ribosyl)glycinamide + L-glutamine + ATP + H2O = 2-formamido-N(1)-(5-O-phospho-beta-D-ribosyl)acetamidine + L-glutamate + ADP + phosphate + H(+). Its pathway is purine metabolism; IMP biosynthesis via de novo pathway; 5-amino-1-(5-phospho-D-ribosyl)imidazole from N(2)-formyl-N(1)-(5-phospho-D-ribosyl)glycinamide: step 1/2. Part of the phosphoribosylformylglycinamidine synthase complex involved in the purines biosynthetic pathway. Catalyzes the ATP-dependent conversion of formylglycinamide ribonucleotide (FGAR) and glutamine to yield formylglycinamidine ribonucleotide (FGAM) and glutamate. The FGAM synthase complex is composed of three subunits. PurQ produces an ammonia molecule by converting glutamine to glutamate. PurL transfers the ammonia molecule to FGAR to form FGAM in an ATP-dependent manner. PurS interacts with PurQ and PurL and is thought to assist in the transfer of the ammonia molecule from PurQ to PurL. In Rhizobium johnstonii (strain DSM 114642 / LMG 32736 / 3841) (Rhizobium leguminosarum bv. viciae), this protein is Phosphoribosylformylglycinamidine synthase subunit PurL.